A 133-amino-acid chain; its full sequence is Magnetosome protein MamC (133 aa).

Over Met1–Asn5 the chain is Cytoplasmic. A helical membrane pass occupies residues Leu6–Gly26. Residues Ser27–Tyr67 are Lumenal-facing. Residues Lys37–Gly57 are magnetite interacting component (MIC) binds magnetite. A helical membrane pass occupies residues Ala68–Val88. Topologically, residues Ala89–Pro133 are cytoplasmic. Positions Leu105–Pro133 are disordered.

It belongs to the magnetosome MamC family. As to quaternary structure, probably interacts with MamA.

It localises to the magnetosome membrane. In terms of biological role, probably helps control the size of magnetite crystals; in vitro synthesis of magnetite yields larger and more well-developed magnetite crystals in the presence of purified MamC. Binds Fe(3+). The lumenal domain probably binds magnetite crystals, affecting crystal size and shape. Purified MamC self-assembles into micelles in the presence of ferric chloride hexahydrate (FeCl(3).6H(2)O); both oxygen and iron are present in the proteinaceous micelles. Whether this is relevant in vivo is unknown. In Magnetococcus marinus (strain ATCC BAA-1437 / JCM 17883 / MC-1), this protein is Magnetosome protein MamC.